Reading from the N-terminus, the 342-residue chain is Elongation factor Ts (342 aa).

Positions 79 to 82 (TDFV) are involved in Mg(2+) ion dislocation from EF-Tu.

The protein belongs to the EF-Ts family.

Its subcellular location is the cytoplasm. In terms of biological role, associates with the EF-Tu.GDP complex and induces the exchange of GDP to GTP. It remains bound to the aminoacyl-tRNA.EF-Tu.GTP complex up to the GTP hydrolysis stage on the ribosome. This Lactococcus lactis subsp. cremoris (strain MG1363) protein is Elongation factor Ts.